We begin with the raw amino-acid sequence, 353 residues long: Basic membrane protein C (353 aa).

Residues 1–16 (MFKRFIFITLSLLVFA) form the signal peptide. C17 carries the N-palmitoyl cysteine lipid modification. Residue C17 is the site of S-diacylglycerol cysteine attachment.

It belongs to the BMP lipoprotein family. In terms of assembly, monomer.

It localises to the cell inner membrane. May be part of an ABC-type nucleoside uptake system involved in the purine salvage pathway. The protein is Basic membrane protein C (bmpC) of Borreliella burgdorferi (strain N40) (Borrelia burgdorferi).